Reading from the N-terminus, the 481-residue chain is Cobyric acid synthase (481 aa).

In terms of domain architecture, GATase cobBQ-type spans 249–436; sequence GLHIVCLRLS…LHGMFRDDAF (188 aa). Residue Cys331 is the Nucleophile of the active site. His428 is a catalytic residue.

It belongs to the CobB/CobQ family. CobQ subfamily.

Its pathway is cofactor biosynthesis; adenosylcobalamin biosynthesis. Functionally, catalyzes amidations at positions B, D, E, and G on adenosylcobyrinic A,C-diamide. NH(2) groups are provided by glutamine, and one molecule of ATP is hydrogenolyzed for each amidation. This Jannaschia sp. (strain CCS1) protein is Cobyric acid synthase.